A 63-amino-acid chain; its full sequence is Anionic peptide 10.1 (63 aa).

The signal sequence occupies residues 1 to 20 (MISRFCLLFLLVFVVSKIQA).

It belongs to the non-disulfide-bridged peptide (NDBP) superfamily. Long chain multifunctional peptide (group 2) family. As to expression, expressed by the venom gland.

The protein localises to the secreted. In Lychas mucronatus (Chinese swimming scorpion), this protein is Anionic peptide 10.1.